The chain runs to 128 residues: Large ribosomal subunit protein uL24 (128 aa).

It belongs to the universal ribosomal protein uL24 family. In terms of assembly, part of the 50S ribosomal subunit.

One of two assembly initiator proteins, it binds directly to the 5'-end of the 23S rRNA, where it nucleates assembly of the 50S subunit. In terms of biological role, located at the polypeptide exit tunnel on the outside of the subunit. This is Large ribosomal subunit protein uL24 from Pyrobaculum calidifontis (strain DSM 21063 / JCM 11548 / VA1).